The sequence spans 447 residues: Methylenetetrahydrofolate--tRNA-(uracil-5-)-methyltransferase TrmFO (447 aa).

Glycine 13–glycine 18 contacts FAD.

It belongs to the MnmG family. TrmFO subfamily. FAD serves as cofactor.

Its subcellular location is the cytoplasm. It catalyses the reaction uridine(54) in tRNA + (6R)-5,10-methylene-5,6,7,8-tetrahydrofolate + NADH + H(+) = 5-methyluridine(54) in tRNA + (6S)-5,6,7,8-tetrahydrofolate + NAD(+). The enzyme catalyses uridine(54) in tRNA + (6R)-5,10-methylene-5,6,7,8-tetrahydrofolate + NADPH + H(+) = 5-methyluridine(54) in tRNA + (6S)-5,6,7,8-tetrahydrofolate + NADP(+). Functionally, catalyzes the folate-dependent formation of 5-methyl-uridine at position 54 (M-5-U54) in all tRNAs. The polypeptide is Methylenetetrahydrofolate--tRNA-(uracil-5-)-methyltransferase TrmFO (Streptococcus thermophilus (strain ATCC BAA-250 / LMG 18311)).